We begin with the raw amino-acid sequence, 385 residues long: Taurine hydroxylase-like protein SAT17 (385 aa).

It participates in mycotoxin biosynthesis. Its function is as follows. Taurine hydroxylase-like protein; part of the satratoxin SC3 cluster involved in the biosynthesis of satratoxins, trichothecene mycotoxins that are associated with human food poisonings. Satratoxins are suggested to be made by products of multiple gene clusters (SC1, SC2 and SC3) that encode 21 proteins in all, including polyketide synthases, acetyltransferases, and other enzymes expected to modify the trichothecene skeleton. SC1 encodes 10 proteins, SAT1 to SAT10. The largest are SAT8, which encodes a putative polyketide synthase (PKS) with a conventional non-reducing architecture, and SAT10, a putative protein containing four ankyrin repeats and thus may be involved in protein scaffolding. The putative short-chain reductase SAT3 may assist the PKS in some capacity. SAT6 contains a secretory lipase domain and acts probably as a trichothecene esterase. SAT5 encodes a putative acetyltransferase, and so, with SAT6, may affect endogenous protection from toxicity. The probable transcription factor SAT9 may regulate the expression of the SC1 cluster. SC2 encodes proteins SAT11 to SAT16, the largest of which encodes the putative reducing PKS SAT13. SAT11 is a cytochrome P450 monooxygenase, while SAT14 and SAT16 are probable acetyltransferases. The SC2 cluster may be regulated by the transcription factor SAT15. SC3 is a small cluster that encodes 5 proteins, SAT17 to SAT21. SAT21 is a putative MFS-type transporter which may have a role in exporting secondary metabolites. The four other proteins putatively encoded in SC3 include the taurine hydroxylase-like protein SAT17, the O-methyltransferase SAT18, the acetyltransferase SAT19, and the Cys6-type zinc finger SAT20, the latter being probably involved in regulation of SC3 expression. The sequence is that of Taurine hydroxylase-like protein SAT17 from Stachybotrys chartarum (strain CBS 109288 / IBT 7711) (Toxic black mold).